Here is a 115-residue protein sequence, read N- to C-terminus: Evasin P1182 (115 aa).

Positions 1-26 (MALNWSFRVIFVSTMWCALLKFATLG) are cleaved as a signal peptide. Intrachain disulfides connect C38–C58, C54–C94, C70–C99, and C89–C108. N45, N72, and N103 each carry an N-linked (GlcNAc...) asparagine glycan.

It localises to the secreted. Its function is as follows. Salivary chemokine-binding protein which binds to host chemokines CCL2, CCL3, CCL4, CCL8 and CCL18. In Amblyomma maculatum (Gulf Coast tick), this protein is Evasin P1182.